Reading from the N-terminus, the 467-residue chain is tRNA modification GTPase MnmE (467 aa).

Residues Arg30, Glu92, and Arg131 each contribute to the (6S)-5-formyl-5,6,7,8-tetrahydrofolate site. Residues 226 to 388 (GLKVAIIGRP…LEAAILNAVN (163 aa)) enclose the TrmE-type G domain. Residue Asn236 participates in K(+) binding. GTP contacts are provided by residues 236–241 (NVGKSS), 255–261 (TDLPGTT), and 280–283 (DTAG). Ser240 provides a ligand contact to Mg(2+). K(+) contacts are provided by Thr255, Leu257, and Thr260. Thr261 is a Mg(2+) binding site. Lys467 contacts (6S)-5-formyl-5,6,7,8-tetrahydrofolate.

This sequence belongs to the TRAFAC class TrmE-Era-EngA-EngB-Septin-like GTPase superfamily. TrmE GTPase family. In terms of assembly, homodimer. Heterotetramer of two MnmE and two MnmG subunits. K(+) is required as a cofactor.

Its subcellular location is the cytoplasm. Exhibits a very high intrinsic GTPase hydrolysis rate. Involved in the addition of a carboxymethylaminomethyl (cmnm) group at the wobble position (U34) of certain tRNAs, forming tRNA-cmnm(5)s(2)U34. This is tRNA modification GTPase MnmE from Trichodesmium erythraeum (strain IMS101).